Here is a 224-residue protein sequence, read N- to C-terminus: Probable C-&gt;U-editing enzyme APOBEC-2 (224 aa).

Positions Met-1–Asp-25 are disordered. Zn(2+) contacts are provided by Glu-60 and His-98. The region spanning Gly-64–Leu-169 is the CMP/dCMP-type deaminase domain. The active-site Proton donor is Glu-100. Zn(2+) contacts are provided by Cys-128 and Cys-131.

This sequence belongs to the cytidine and deoxycytidylate deaminase family. As to quaternary structure, homotetramer. Zn(2+) is required as a cofactor.

The enzyme catalyses cytidine(6666) in apoB mRNA + H2O + H(+) = uridine(6666) in apoB mRNA + NH4(+). Functionally, probable C to U editing enzyme whose physiological substrate is not yet known. Does not display detectable apoB mRNA editing. Has a low intrinsic cytidine deaminase activity. May play a role in the epigenetic regulation of gene expression through the process of active DNA demethylation. This Pongo pygmaeus (Bornean orangutan) protein is Probable C-&gt;U-editing enzyme APOBEC-2 (APOBEC2).